The following is an 89-amino-acid chain: Co-chaperonin GroES (89 aa).

Belongs to the GroES chaperonin family. In terms of assembly, heptamer of 7 subunits arranged in a ring. Interacts with the chaperonin GroEL.

Its subcellular location is the cytoplasm. In terms of biological role, together with the chaperonin GroEL, plays an essential role in assisting protein folding. The GroEL-GroES system forms a nano-cage that allows encapsulation of the non-native substrate proteins and provides a physical environment optimized to promote and accelerate protein folding. GroES binds to the apical surface of the GroEL ring, thereby capping the opening of the GroEL channel. This is Co-chaperonin GroES from Pseudothermotoga lettingae (strain ATCC BAA-301 / DSM 14385 / NBRC 107922 / TMO) (Thermotoga lettingae).